The primary structure comprises 89 residues: Small ribosomal subunit protein uS14 (89 aa).

Belongs to the universal ribosomal protein uS14 family. As to quaternary structure, part of the 30S ribosomal subunit. Contacts proteins S3 and S10.

Binds 16S rRNA, required for the assembly of 30S particles and may also be responsible for determining the conformation of the 16S rRNA at the A site. The sequence is that of Small ribosomal subunit protein uS14 from Cytophaga hutchinsonii (strain ATCC 33406 / DSM 1761 / CIP 103989 / NBRC 15051 / NCIMB 9469 / D465).